A 381-amino-acid chain; its full sequence is Transcriptional regulatory protein FlgR (381 aa).

Residues 2 to 113 (KIAIVEDDIN…LLLESIYRTK (112 aa)) enclose the Response regulatory domain. Aspartate 51 is subject to 4-aspartylphosphate. A Sigma-54 factor interaction domain is found at 136–365 (FLAASKALEE…LLGVVERAAI (230 aa)). ATP is bound by residues 164-171 (GESGVGKE) and 227-236 (ANKGTIFLDE).

Phosphorylated by FlgS.

Functionally, member of the two-component regulatory system FlgR/FlgS that induces the transcriptional induction of the genes needed in motility and flagellar biogenesis. Upon phosphorylation by FlgS, functions as a transcriptional regulator and activates transcription of RpoN-dependent flagellar genes. The sequence is that of Transcriptional regulatory protein FlgR (flgR) from Helicobacter pylori (strain ATCC 700392 / 26695) (Campylobacter pylori).